The sequence spans 1324 residues: Tetratricopeptide repeat protein 21 homolog (1324 aa).

16 TPR repeats span residues 58-91 (PALA…NDVA), 414-446 (SPLY…LVEM), 582-615 (SLYH…PRKE), 669-702 (DQLV…QSNF), 737-770 (PGSY…QSKD), 772-804 (QLAE…YKDK), 806-837 (MRLK…DPEP), 847-880 (IQFL…HSRI), 894-927 (ARIC…HETD), 929-961 (KANL…DPHN), 963-995 (EANS…NPQH), 997-1029 (HALS…NPRC), 1033-1066 (SGYN…AAGW), 1205-1238 (EKCW…NCNC), 1240-1272 (KAFE…TKER), and 1274-1307 (PGFG…NPQY).

This sequence belongs to the TTC21 family. In terms of assembly, component of the IFT complex A (IFT-A) composed of at least che-11, daf-10, dyf-2, ift-139, ift-43 and ifta-1. As to expression, expressed in ciliated sensory neurons in the head and tail.

Its subcellular location is the cell projection. The protein resides in the cilium. The protein localises to the cytoplasm. It localises to the cytoskeleton. It is found in the cilium basal body. Its subcellular location is the dendrite. In terms of biological role, component of the IFT complex A (IFT-A), a complex required for retrograde ciliary transport. In particular, may act redundantly with the intraflagellar transport protein ift-43 to regulate the transport of specific ciliary cargo proteins such as che-3 which are related to motility. Functions in cilia biogenesis. This is Tetratricopeptide repeat protein 21 homolog from Caenorhabditis elegans.